The sequence spans 499 residues: WD repeat-containing protein 55 homolog (499 aa).

The segment at 1–130 is disordered; the sequence is MHTHNNFKTP…EATFDLDVDD (130 aa). Composition is skewed to acidic residues over residues 12-23 and 31-48; these read DEDELDDLDEDM and IEQEVLNESDSDNDEYDL. Over residues 91–103 the composition is skewed to low complexity; sequence DDAGGASAGGATS. Positions 113-122 are enriched in polar residues; that stretch reads PSGSNRQSEA. 6 WD repeats span residues 154–193, 198–237, 241–279, 282–321, 324–363, and 408–447; these read KLEDFITDICFHPDRDIIALATIIGDVHLYEYDNEANKLL, VHSKACRDVEFTEDGRFLLTCSKDKCVMVTDMETEKLKKL, AHDDAINTLHVLNENLFATGDDAGTVKLWDLRTKNAIFE, ELEDQITQLTTNDQNKLLLATSADGYLTTFNIAARKMYVQ, PYEEELSCMGIYRGDSKLVVGTSKGRLYTYNWGQFGYHCD, and QHNMPIESLDVNSSGELIASSSHNNDVRFWNVKYFEDFGD. Residues 480–499 form a disordered region; it reads TKEDADDDDHDPSAGPSNMA.

Belongs to the WD repeat WDR55 family.

This chain is WD repeat-containing protein 55 homolog, found in Drosophila yakuba (Fruit fly).